The following is a 202-amino-acid chain: Methylthioribulose-1-phosphate dehydratase (202 aa).

The Zn(2+) site is built by histidine 93 and histidine 95.

The protein belongs to the aldolase class II family. MtnB subfamily. Zn(2+) is required as a cofactor.

The enzyme catalyses 5-(methylsulfanyl)-D-ribulose 1-phosphate = 5-methylsulfanyl-2,3-dioxopentyl phosphate + H2O. It functions in the pathway amino-acid biosynthesis; L-methionine biosynthesis via salvage pathway; L-methionine from S-methyl-5-thio-alpha-D-ribose 1-phosphate: step 2/6. In terms of biological role, catalyzes the dehydration of methylthioribulose-1-phosphate (MTRu-1-P) into 2,3-diketo-5-methylthiopentyl-1-phosphate (DK-MTP-1-P). The chain is Methylthioribulose-1-phosphate dehydratase from Klebsiella pneumoniae (strain 342).